The primary structure comprises 398 residues: LIM/homeobox protein Lhx3 (398 aa).

LIM zinc-binding domains lie at 28 to 78 (CAGC…CKDD) and 87 to 141 (CAAC…CKAD). The segment at residues 154–213 (AKRPRTTITAKQLETLKNAYNNSPKPARHVREQLSTETGLDMRVVQVWFQNRRAKEKRLK) is a DNA-binding region (homeobox). 2 disordered regions span residues 208 to 294 (KEKR…FPLE) and 307 to 398 (DIQA…HAQF). Positions 272-282 (SSLSESSPALS) are enriched in low complexity.

It localises to the nucleus. In terms of biological role, transcription factor. This Danio rerio (Zebrafish) protein is LIM/homeobox protein Lhx3 (lhx3).